The primary structure comprises 297 residues: IMPACT family member C14C8.09c (297 aa).

The stretch at 225-255 forms a coiled coil; sequence LRSELQEKNQKDKKKEVNKLEEKMTNAKEPN. Composition is skewed to basic and acidic residues over residues 228–250 and 280–297; these read ELQE…KMTN and SVDH…EKEE. Residues 228-297 form a disordered region; sequence ELQEKNQKDK…KIIKDVEKEE (70 aa).

It belongs to the IMPACT family.

This chain is IMPACT family member C14C8.09c, found in Schizosaccharomyces pombe (strain 972 / ATCC 24843) (Fission yeast).